The following is a 225-amino-acid chain: NAD(P)H-quinone oxidoreductase subunit K, chloroplastic (225 aa).

The [4Fe-4S] cluster site is built by cysteine 43, cysteine 44, cysteine 108, and cysteine 139.

Belongs to the complex I 20 kDa subunit family. NDH is composed of at least 16 different subunits, 5 of which are encoded in the nucleus. The cofactor is [4Fe-4S] cluster.

The protein resides in the plastid. The protein localises to the chloroplast thylakoid membrane. It carries out the reaction a plastoquinone + NADH + (n+1) H(+)(in) = a plastoquinol + NAD(+) + n H(+)(out). The catalysed reaction is a plastoquinone + NADPH + (n+1) H(+)(in) = a plastoquinol + NADP(+) + n H(+)(out). NDH shuttles electrons from NAD(P)H:plastoquinone, via FMN and iron-sulfur (Fe-S) centers, to quinones in the photosynthetic chain and possibly in a chloroplast respiratory chain. The immediate electron acceptor for the enzyme in this species is believed to be plastoquinone. Couples the redox reaction to proton translocation, and thus conserves the redox energy in a proton gradient. This Nuphar advena (Common spatterdock) protein is NAD(P)H-quinone oxidoreductase subunit K, chloroplastic.